The following is a 294-amino-acid chain: Phosphatidylinositol transfer protein SFH5 (294 aa).

One can recognise a CRAL-TRIO domain in the interval 100-266 (HNTELQNVGI…GYGGKDKKNN (167 aa)). Tyr-128, Arg-148, His-173, Tyr-175, and Lys-209 together coordinate heme.

The protein belongs to the SFH5 family. Heme b serves as cofactor.

The protein localises to the cytoplasm. It localises to the endoplasmic reticulum membrane. The protein resides in the microsome membrane. The catalysed reaction is a 1,2-diacyl-sn-glycero-3-phospho-(1D-myo-inositol)(in) = a 1,2-diacyl-sn-glycero-3-phospho-(1D-myo-inositol)(out). In terms of biological role, non-classical phosphatidylinositol (PtdIns) transfer protein (PITP), which exhibits PtdIns-binding/transfer activity in the absence of detectable PtdCho-binding/transfer activity. Regulates PtdIns(4,5)P2 homeostasis at the plasma membrane. Heme-binding protein that may play a role in organic oxidant-induced stress responses. In Saccharomyces cerevisiae (strain YJM789) (Baker's yeast), this protein is Phosphatidylinositol transfer protein SFH5 (SFH5).